We begin with the raw amino-acid sequence, 217 residues long: Large ribosomal subunit protein uL29m (217 aa).

It belongs to the universal ribosomal protein uL29 family. As to quaternary structure, component of the mitochondrial large ribosomal subunit. Mature mitochondrial ribosomes consist of a small (37S) and a large (54S) subunit. The 37S subunit contains at least 33 different proteins and 1 molecule of RNA (15S). The 54S subunit contains at least 45 different proteins and 1 molecule of RNA (21S).

The protein localises to the mitochondrion. In Aspergillus fumigatus (strain ATCC MYA-4609 / CBS 101355 / FGSC A1100 / Af293) (Neosartorya fumigata), this protein is Large ribosomal subunit protein uL29m (mrpl4).